The following is a 353-amino-acid chain: Membrane lipoprotein TmpC (353 aa).

Residues 1–20 (MREKWVRAFAGVFCAMLLIG) form the signal peptide. Cysteine 21 carries N-palmitoyl cysteine lipidation. Cysteine 21 is lipidated: S-diacylglycerol cysteine. Aspartate 47 contacts guanosine. Aspartate 47 serves as a coordination point for inosine. Residues 47–48 (DS) and phenylalanine 56 each bind adenosine. Asparagine 57, aspartate 128, phenylalanine 206, glycine 232, aspartate 258, and lysine 280 together coordinate guanosine. 2 residues coordinate inosine: asparagine 57 and aspartate 128. Residues aspartate 128, phenylalanine 206, glycine 232, aspartate 258, and lysine 280 each coordinate adenosine. Glycine 232, aspartate 258, and lysine 280 together coordinate inosine.

The protein belongs to the BMP lipoprotein family. In terms of assembly, monomer.

The protein localises to the cell membrane. Binds purine nucleosides and may play a role in purine nucleoside uptake. May be part of an ABC-type nucleoside uptake system. Has highest affinity for guanosine, followed by inosine and adenosine. Has very low affinity for cytidine and does not bind thymidine. The protein is Membrane lipoprotein TmpC (tmpC) of Treponema pallidum (strain Nichols).